Here is a 484-residue protein sequence, read N- to C-terminus: UDP-N-acetylmuramoyl-L-alanyl-D-glutamate--L-lysine ligase (484 aa).

A UDP-N-acetyl-alpha-D-muramoyl-L-alanyl-D-glutamate-binding site is contributed by Ser-43. 119 to 125 lines the ATP pocket; it reads GTKGKTT. Residues 161–162, Ser-188, and Arg-196 contribute to the UDP-N-acetyl-alpha-D-muramoyl-L-alanyl-D-glutamate site; that span reads TT. Lys-230 bears the N6-carboxylysine mark. The L-lysine recognition motif motif lies at 405-408; that stretch reads DDPN.

The protein belongs to the MurCDEF family. MurE subfamily. Carboxylation is probably crucial for Mg(2+) binding and, consequently, for the gamma-phosphate positioning of ATP.

The protein resides in the cytoplasm. The enzyme catalyses UDP-N-acetyl-alpha-D-muramoyl-L-alanyl-D-glutamate + L-lysine + ATP = UDP-N-acetyl-alpha-D-muramoyl-L-alanyl-gamma-D-glutamyl-L-lysine + ADP + phosphate + H(+). It participates in cell wall biogenesis; peptidoglycan biosynthesis. In terms of biological role, catalyzes the addition of L-lysine to the nucleotide precursor UDP-N-acetylmuramoyl-L-alanyl-D-glutamate (UMAG) in the biosynthesis of bacterial cell-wall peptidoglycan. The chain is UDP-N-acetylmuramoyl-L-alanyl-D-glutamate--L-lysine ligase from Streptococcus agalactiae serotype V (strain ATCC BAA-611 / 2603 V/R).